Reading from the N-terminus, the 68-residue chain is DNA-directed RNA polymerase subunit omega (68 aa).

It belongs to the RNA polymerase subunit omega family. As to quaternary structure, the RNAP catalytic core consists of 2 alpha, 1 beta, 1 beta' and 1 omega subunit. When a sigma factor is associated with the core the holoenzyme is formed, which can initiate transcription.

The catalysed reaction is RNA(n) + a ribonucleoside 5'-triphosphate = RNA(n+1) + diphosphate. Promotes RNA polymerase assembly. Latches the N- and C-terminal regions of the beta' subunit thereby facilitating its interaction with the beta and alpha subunits. This Alkaliphilus metalliredigens (strain QYMF) protein is DNA-directed RNA polymerase subunit omega.